Here is a 186-residue protein sequence, read N- to C-terminus: Ribosome-recycling factor (186 aa).

Belongs to the RRF family.

Its subcellular location is the cytoplasm. Its function is as follows. Responsible for the release of ribosomes from messenger RNA at the termination of protein biosynthesis. May increase the efficiency of translation by recycling ribosomes from one round of translation to another. The polypeptide is Ribosome-recycling factor (Beijerinckia indica subsp. indica (strain ATCC 9039 / DSM 1715 / NCIMB 8712)).